A 182-amino-acid polypeptide reads, in one-letter code: Ribulose bisphosphate carboxylase small subunit, chloroplastic 4 (182 aa).

Residues 1–41 constitute a chloroplast transit peptide; that stretch reads MSAAMMNKSVVLSKQCTKPAATPKVVTSKRSFASTVANKNR.

This sequence belongs to the RuBisCO small chain family. Heterohexadecamer of 8 large and 8 small subunits.

The protein resides in the plastid. The protein localises to the chloroplast. In terms of biological role, ruBisCO catalyzes two reactions: the carboxylation of D-ribulose 1,5-bisphosphate, the primary event in carbon dioxide fixation, as well as the oxidative fragmentation of the pentose substrate. Both reactions occur simultaneously and in competition at the same active site. Although the small subunit is not catalytic it is essential for maximal activity. The protein is Ribulose bisphosphate carboxylase small subunit, chloroplastic 4 of Acetabularia acetabulum (Mermaid's wine glass).